Here is a 328-residue protein sequence, read N- to C-terminus: Gonadotropin-releasing hormone receptor (328 aa).

At 1 to 38 the chain is on the extracellular side; sequence MANSASPEQNQNHCSAINNSIPLMQGNLPTLTLSGKIR. Asn18 carries N-linked (GlcNAc...) asparagine glycosylation. A helical transmembrane segment spans residues 39-58; it reads VTVTFFLFLLSATFNASFLL. Residues 59 to 77 lie on the Cytoplasmic side of the membrane; sequence KLQKWTQKKEKGKKLSRMK. The helical transmembrane segment at 78–97 threads the bilayer; sequence LLLKHLTLANLLETLIVMPL. Over 98–115 the chain is Extracellular; that stretch reads DGMWNITVQWYAGELLCK. Asn102 carries an N-linked (GlcNAc...) asparagine glycan. An intrachain disulfide couples Cys114 to Cys196. A helical membrane pass occupies residues 116–137; it reads VLSYLKLFSMYAPAFMMVVISL. Topologically, residues 138–164 are cytoplasmic; that stretch reads DRSLAITRPLALKSNSKVGQSMVGLAW. Residues 165–184 traverse the membrane as a helical segment; that stretch reads ILSSVFAGPQLYIFRMIHLA. The Extracellular portion of the chain corresponds to 185–212; that stretch reads DSSGQTKVFSQCVTHCSFSQWWHQAFYN. The helical transmembrane segment at 213 to 232 threads the bilayer; the sequence is FFTFSCLFIIPLFIMLICNA. The Cytoplasmic portion of the chain corresponds to 233-281; sequence KIIFTLTRVLHQDPHELQLNQSKNNIPRARLKTLKMTVAFATSFTVCWT. Residues 282–300 traverse the membrane as a helical segment; the sequence is PYYVLGIWYWFDPEMLNRL. Topologically, residues 301 to 306 are extracellular; that stretch reads SDPVNH. The chain crosses the membrane as a helical span at residues 307 to 326; it reads FFFLFAFLNPCFDPLIYGYF. Topologically, residues 327 to 328 are cytoplasmic; it reads SL.

It belongs to the G-protein coupled receptor 1 family. In terms of tissue distribution, pituitary, ovary, testis, breast and prostate but not in liver and spleen.

It is found in the cell membrane. Functionally, receptor for gonadotropin releasing hormone (GnRH) that mediates the action of GnRH to stimulate the secretion of the gonadotropic hormones luteinizing hormone (LH) and follicle-stimulating hormone (FSH). This receptor mediates its action by association with G-proteins that activate a phosphatidylinositol-calcium second messenger system. Isoform 2 may act as an inhibitor of GnRH-R signaling. This is Gonadotropin-releasing hormone receptor (GNRHR) from Homo sapiens (Human).